A 161-amino-acid polypeptide reads, in one-letter code: Cytochrome c-type biogenesis protein CcmE (161 aa).

The Cytoplasmic segment spans residues 1 to 8 (MNPVRKKR). Residues 9–29 (LYIVLAILCGVSIAVALALTA) traverse the membrane as a helical; Signal-anchor for type II membrane protein segment. Topologically, residues 30–161 (LQENINLFYT…AKGYQQESAQ (132 aa)) are periplasmic. Heme contacts are provided by H124 and Y128.

It belongs to the CcmE/CycJ family.

Its subcellular location is the cell inner membrane. Heme chaperone required for the biogenesis of c-type cytochromes. Transiently binds heme delivered by CcmC and transfers the heme to apo-cytochromes in a process facilitated by CcmF and CcmH. The protein is Cytochrome c-type biogenesis protein CcmE of Ectopseudomonas mendocina (strain ymp) (Pseudomonas mendocina).